The following is a 246-amino-acid chain: Dihydroorotate dehydrogenase B (NAD(+)), electron transfer subunit (246 aa).

Residues 3-95 form the FAD-binding FR-type domain; the sequence is MEYFKGKVKE…IGPLGNGFDI (93 aa). FAD-binding positions include 48 to 51 and 70 to 71; these read RPIS and GT. The [2Fe-2S] cluster site is built by Cys-213, Cys-218, Cys-221, and Cys-233.

The protein belongs to the PyrK family. As to quaternary structure, heterotetramer of 2 PyrK and 2 PyrD type B subunits. It depends on [2Fe-2S] cluster as a cofactor. The cofactor is FAD.

It functions in the pathway pyrimidine metabolism; UMP biosynthesis via de novo pathway; orotate from (S)-dihydroorotate (NAD(+) route): step 1/1. In terms of biological role, responsible for channeling the electrons from the oxidation of dihydroorotate from the FMN redox center in the PyrD type B subunit to the ultimate electron acceptor NAD(+). This chain is Dihydroorotate dehydrogenase B (NAD(+)), electron transfer subunit, found in Clostridium perfringens (strain 13 / Type A).